The primary structure comprises 425 residues: Protein let-756 (425 aa).

Disordered stretches follow at residues 277-298 and 314-425; these read LEEK…LRKE and EEEL…QRYP. Over residues 281 to 291 the composition is skewed to basic residues; it reads KRRREKKKRRR. Polar residues predominate over residues 329 to 340; sequence ASTQTRYNRPQN. Residues 378-389 are compositionally biased toward basic residues; the sequence is HNSHHHHHHHPR. Residues 395-425 show a composition bias toward polar residues; sequence DPQQRHQSQQHYLAQTVSNPNRQNVNYQRYP.

This sequence belongs to the heparin-binding growth factors family. Interacts with pal-1. As to expression, expressed in pharynx, CAN neuron and body wall muscles.

The protein localises to the nucleus. It is found in the membrane. Required for larval development. Probably by binding receptor egl-15, negatively regulates membrane protrusion from body wall muscles during larval development. The polypeptide is Protein let-756 (let-756) (Caenorhabditis elegans).